Consider the following 277-residue polypeptide: uncharacterized protein (277 aa).

Disordered stretches follow at residues Lys33 to Arg168 and Asn210 to Phe277. A compositionally biased stretch (basic and acidic residues) spans Asn34–Ser45. The span at Leu86–Ser99 shows a compositional bias: basic residues. Basic and acidic residues-rich tracts occupy residues Lys100 to Val113, Ala151 to Arg168, and Thr216 to Lys230. The segment covering Asp231–Arg241 has biased composition (basic residues). The segment covering Arg242–Asn258 has biased composition (basic and acidic residues). Residues Lys259–Asn271 show a composition bias toward polar residues.

The protein resides in the cytoplasm. This is an uncharacterized protein from Saccharomyces cerevisiae (strain ATCC 204508 / S288c) (Baker's yeast).